The sequence spans 586 residues: SPbeta prophage-derived uncharacterized protein YorA (586 aa).

PbH1 repeat units follow at residues Ala108–Gly147, Ser148–Ala170, Ser184–Gly206, Cys207–Gly235, Pro246–Thr268, Ser288–Gly313, Gly320–Gly341, Ala364–Val384, Ser387–Asp410, Ser411–Arg432, Ala435–Lys456, Met481–Gly504, and Gly505–Gly531.

In Bacillus subtilis (strain 168), this protein is SPbeta prophage-derived uncharacterized protein YorA (yorA).